A 315-amino-acid chain; its full sequence is MQKPWVEKYRPETLSEVVGHHEIIKRLTNYVEKKSMPHLLFSGSPGVGKTTAALALAKDLYGDTWRENFLELNSSDERGIDVIRTKVKDFARTKPIGDAPFKVIFLDESDALTSDAQNALRRTMEKYSDICRFILSCNYPSKIIPPIQSRCAIFRFSPLKTEDLVENLKDISEKENLNLEKGGIDAIIYVSEGDMRKAINVLQTAAAVSDEITEEIVYKVASKARPDEIKKMTQLALNGKFVEAREQLYNLMIDWGMSGEDILIQVFREVPNLDISEKEKVHLVEAIGECDFRIVEGSNERIQLSALLAKMGILE.

43–50 lines the ATP pocket; that stretch reads GSPGVGKT.

It belongs to the activator 1 small subunits family. RfcS subfamily. In terms of assembly, heteromultimer composed of small subunits (RfcS) and large subunits (RfcL).

Part of the RFC clamp loader complex which loads the PCNA sliding clamp onto DNA. The polypeptide is Replication factor C small subunit (Methanococcus maripaludis (strain DSM 14266 / JCM 13030 / NBRC 101832 / S2 / LL)).